A 577-amino-acid polypeptide reads, in one-letter code: MSKPELKEDKMLEVHFVGDDDVLNHILDREGGAKLKKERAQLLVNPKKIIKKPEYDLEEDDQEVLKDQNYVEIMGRDVQESLKNGSATGGGNKVYSFQNRKHSEKMAKLASELAKTPQKSVSFSLKNDPEITINVPQSSKGHSASDKVQPKNNDKSEFLSTAPRSLRKRLIVPRSHSDSESEYSASNSEDDEGVAQEHEEDTNAVIFSQKIQAQNRVVSAPVGKETPSKRMKRDKTSDLVEEYFEAHSSSKVLTSDRTLQKLKRAKLDQQTLRNLLSKVSPSFSAELKQLNQQYEKLFHKWMLQLHLGFNIVLYGLGSKRDLLERFRTTMLQDSIHVVINGFFPGISVKSVLNSITEEVLDHMGTFRSILDQLDWIVNKFKEDSSLELFLLIHNLDSQMLRGEKSQQIIGQLSSLHNIYLIASIDHLNAPLMWDHAKQSLFNWLWYETTTYSPYTEETSYENSLLVKQSGSLPLSSLTHVLRSLTPNARGIFRLLIKYQLDNQDNPSYIGLSFQDFYQQCREAFLVNSDLTLRAQLTEFRDHKLIRTKKGTDGVEYLLIPVDNGTLTDFLEKEEEEA.

Residues 1–100 (MSKPELKEDK…GNKVYSFQNR (100 aa)) form an Involved in LRWD1-binding repeat. A disordered region spans residues 81-199 (SLKNGSATGG…DDEGVAQEHE (119 aa)). At T116 the chain carries Phosphothreonine. S122 and S138 each carry phosphoserine. The span at 143–157 (SASDKVQPKNNDKSE) shows a compositional bias: basic and acidic residues. Residues 188–199 (SEDDEGVAQEHE) are compositionally biased toward acidic residues. Residue T226 is modified to Phosphothreonine. S248 and S280 each carry phosphoserine.

This sequence belongs to the ORC2 family. Component of ORC, a complex composed of at least 6 subunits: ORC1, ORC2, ORC3, ORC4, ORC5 and ORC6. ORC is regulated in a cell-cycle dependent manner. It is sequentially assembled at the exit from anaphase of mitosis and disassembled as cells enter S phase. Interacts with DBF4. Interacts with MCM10. Interacts with LRWD1 throughout the cell cycle; this interaction, which occurs only with non-ubiquitinated form of LRWD1, prevents LRWD1 ubiquitination and hence stabilizes the protein. Interacts with POLQ.

Its subcellular location is the nucleus. Functionally, component of the origin recognition complex (ORC) that binds origins of replication. DNA-binding is ATP-dependent. The specific DNA sequences that define origins of replication have not been identified yet. ORC is required to assemble the pre-replication complex necessary to initiate DNA replication. Binds histone H3 and H4 trimethylation marks H3K9me3, H3K20me3 and H4K27me3. Stabilizes LRWD1, by protecting it from ubiquitin-mediated proteasomal degradation. Also stabilizes ORC3. This chain is Origin recognition complex subunit 2 (ORC2), found in Homo sapiens (Human).